We begin with the raw amino-acid sequence, 371 residues long: uncharacterized protein (371 aa).

The next 8 membrane-spanning stretches (helical) occupy residues 4–24 (LPML…FIYG), 60–82 (LIQL…ALYG), 87–109 (LWIV…MLSI), 130–150 (VFIN…FVAS), 197–217 (VVAV…LLPV), 224–244 (IYPL…YGLV), 282–302 (VPIW…GFHA), and 320–340 (FIFY…CMVG).

Belongs to the peptide transporter carbon starvation (CstA) (TC 2.A.114) family.

The protein resides in the cell membrane. This is an uncharacterized protein from Haemophilus influenzae (strain ATCC 51907 / DSM 11121 / KW20 / Rd).